A 211-amino-acid chain; its full sequence is 3,4-dihydroxy-2-butanone 4-phosphate synthase (211 aa).

D-ribulose 5-phosphate-binding positions include 37–38, Asp42, 150–154, and Glu174; these read RE and RIGHT. Mg(2+) is bound at residue Glu38. His153 serves as a coordination point for Mg(2+).

This sequence belongs to the DHBP synthase family. Homodimer. The cofactor is Mg(2+). Mn(2+) serves as cofactor.

It catalyses the reaction D-ribulose 5-phosphate = (2S)-2-hydroxy-3-oxobutyl phosphate + formate + H(+). Its pathway is cofactor biosynthesis; riboflavin biosynthesis; 2-hydroxy-3-oxobutyl phosphate from D-ribulose 5-phosphate: step 1/1. Its function is as follows. Catalyzes the conversion of D-ribulose 5-phosphate to formate and 3,4-dihydroxy-2-butanone 4-phosphate. This is 3,4-dihydroxy-2-butanone 4-phosphate synthase from Buchnera aphidicola subsp. Baizongia pistaciae (strain Bp).